A 210-amino-acid chain; its full sequence is Isomeliandiol synthase ISM1 (210 aa).

Helical transmembrane passes span 17–37 (FTLH…TWFI), 50–70 (LLCW…YFVF), 107–127 (IEGM…YAIV), 135–155 (ILQF…FLTA), and 172–192 (YYVG…INFW). In terms of domain architecture, EXPERA spans 46–188 (GDRLLLCWWA…IWIIVPSLIA (143 aa)).

This sequence belongs to the EBP family.

It is found in the membrane. The enzyme catalyses 7,8-epoxymelianol = isomeliandiol. The protein operates within secondary metabolite biosynthesis; terpenoid biosynthesis. Isomerase involved in the biosynthesis of limonoids and quassinoids triterpene natural products such as ailanthone, chaparrinone, glaucarubinone and amarolide, allelopathic degraded triterpene lactones inhibiting the growth of other plants, and possessing antimalarial, antifeedant, insecticidal, anti-inflammatory and anticancer activities. Catalyzes the conversion of 7,8-epoxymelianol to isomeliandiol via skeletal rearrangements. This is Isomeliandiol synthase ISM1 from Ailanthus altissima (Tree-of-heaven).